The chain runs to 164 residues: Glycine cleavage system H protein, mitochondrial (164 aa).

Residues 1-39 constitute a mitochondrion transit peptide; sequence MAWLVLRRLGPVLAPRCPRLSLRPQVPAVRRLGTGSLLL. The Lipoyl-binding domain maps to 57-139; it reads IGTVGISNFA…YQDGWLIKMT (83 aa). Lys98 is modified (N6-lipoyllysine).

It belongs to the GcvH family. In terms of assembly, the glycine cleavage system is composed of four proteins: P (GLDC), T (GCST), L (DLD) and H (GCSH). Interacts with GLDC. (R)-lipoate serves as cofactor.

It is found in the mitochondrion. Functionally, the glycine cleavage system catalyzes the degradation of glycine. The H protein (GCSH) shuttles the methylamine group of glycine from the P protein (GLDC) to the T protein (GCST). Has a pivotal role in the lipoylation of enzymes involved in cellular energetics such as the mitochondrial dihydrolipoyllysine-residue acetyltransferase component of pyruvate dehydrogenase complex (DLAT), and the mitochondrial dihydrolipoyllysine-residue succinyltransferase component of 2-oxoglutarate dehydrogenase complex (DLST). The chain is Glycine cleavage system H protein, mitochondrial from Gallus gallus (Chicken).